Reading from the N-terminus, the 593-residue chain is Probable tripeptidyl-peptidase SED3 (593 aa).

Residues 1–18 (MLLRWHSVIPLFLTMTVA) form the signal peptide. Residues 19-198 (LPNTYRTVVE…SLQVIYSSTN (180 aa)) constitute a propeptide, removed in mature form. 4 N-linked (GlcNAc...) asparagine glycosylation sites follow: N198, N204, N261, and N275. The Peptidase S53 domain maps to 206-592 (TITPRCLREL…RILAKIVQHM (387 aa)). Residues E282 and D286 each act as charge relay system in the active site. N295 carries N-linked (GlcNAc...) asparagine glycosylation. Residue S496 is the Charge relay system of the active site. Ca(2+) contacts are provided by D538 and I539. N-linked (GlcNAc...) asparagine glycans are attached at residues N554 and N566. G570 and D572 together coordinate Ca(2+).

Ca(2+) serves as cofactor.

It is found in the secreted. The protein resides in the extracellular space. The enzyme catalyses Release of an N-terminal tripeptide from a polypeptide.. Functionally, secreted tripeptidyl-peptidase which degrades proteins at acidic pHs and is involved in virulence. The protein is Probable tripeptidyl-peptidase SED3 (SED3) of Trichophyton verrucosum (strain HKI 0517).